Here is a 345-residue protein sequence, read N- to C-terminus: S-adenosylmethionine:tRNA ribosyltransferase-isomerase (345 aa).

Belongs to the QueA family. Monomer.

It localises to the cytoplasm. The enzyme catalyses 7-aminomethyl-7-carbaguanosine(34) in tRNA + S-adenosyl-L-methionine = epoxyqueuosine(34) in tRNA + adenine + L-methionine + 2 H(+). The protein operates within tRNA modification; tRNA-queuosine biosynthesis. In terms of biological role, transfers and isomerizes the ribose moiety from AdoMet to the 7-aminomethyl group of 7-deazaguanine (preQ1-tRNA) to give epoxyqueuosine (oQ-tRNA). The chain is S-adenosylmethionine:tRNA ribosyltransferase-isomerase from Acidiphilium cryptum (strain JF-5).